Reading from the N-terminus, the 664-residue chain is Protein-arginine deiminase type-3 (664 aa).

This sequence belongs to the protein arginine deiminase family. The cofactor is Ca(2+). Hair follicles, and epidermis at very low levels.

The protein resides in the cytoplasm. It catalyses the reaction L-arginyl-[protein] + H2O = L-citrullyl-[protein] + NH4(+). Functionally, catalyzes the deimination of arginine residues of proteins. This chain is Protein-arginine deiminase type-3 (PADI3), found in Homo sapiens (Human).